A 228-amino-acid chain; its full sequence is Methyltransferase verB (228 aa).

It belongs to the methyltransferase superfamily.

It functions in the pathway secondary metabolite biosynthesis; terpenoid biosynthesis. The protein operates within mycotoxin biosynthesis. Methyltransferase; part of the gene cluster that mediates the biosynthesis of the neurotoxin verrucosidin, a methylated alpha-pyrone polyketide that inhibits oxidative phosphorylation in mitochondria and thereby causes neurological diseases. The carbon backbone of verrucosidin is synthesized by the HR-PKS verA, and further modified by the other verrucodidin cluster enzymes. This is Methyltransferase verB from Penicillium polonicum.